The sequence spans 170 residues: Cyclic pyranopterin monophosphate synthase (170 aa).

Substrate contacts are provided by residues 75-77 (LCH) and 113-114 (ME). Aspartate 128 is an active-site residue.

This sequence belongs to the MoaC family. Homohexamer; trimer of dimers.

The catalysed reaction is (8S)-3',8-cyclo-7,8-dihydroguanosine 5'-triphosphate = cyclic pyranopterin phosphate + diphosphate. It functions in the pathway cofactor biosynthesis; molybdopterin biosynthesis. Functionally, catalyzes the conversion of (8S)-3',8-cyclo-7,8-dihydroguanosine 5'-triphosphate to cyclic pyranopterin monophosphate (cPMP). This is Cyclic pyranopterin monophosphate synthase from Pelotomaculum thermopropionicum (strain DSM 13744 / JCM 10971 / SI).